Reading from the N-terminus, the 97-residue chain is Large ribosomal subunit protein bL28 (97 aa).

This sequence belongs to the bacterial ribosomal protein bL28 family.

The polypeptide is Large ribosomal subunit protein bL28 (Rickettsia rickettsii (strain Iowa)).